The following is a 107-amino-acid chain: Glutaredoxin-1 (107 aa).

N-acetylalanine is present on alanine 2. Residues 3–106 enclose the Glutaredoxin domain; the sequence is QEFVNCKIQS…TRLKQIGALQ (104 aa). Lysine 9 bears the N6-succinyllysine mark. Intrachain disulfides connect cysteine 23-cysteine 26 and cysteine 79-cysteine 83.

The protein belongs to the glutaredoxin family.

Its subcellular location is the cytoplasm. Its function is as follows. Has a glutathione-disulfide oxidoreductase activity in the presence of NADPH and glutathione reductase. Reduces low molecular weight disulfides and proteins. In Mus musculus (Mouse), this protein is Glutaredoxin-1 (Glrx).